We begin with the raw amino-acid sequence, 340 residues long: Cytochrome c oxidase subunit 1 (340 aa).

Residues 18–38 form a helical membrane-spanning segment; it reads MCYLLVAILCGFLGYIYSLFI. Ca(2+) is bound by residues glutamate 41 and glycine 46. Residues 42–62 form a helical membrane-spanning segment; the sequence is LSIIGCGVLFGDYQYYNVLVT. Fe(II)-heme a is bound at residue histidine 64. A run of 7 helical transmembrane segments spans residues 66-86, 100-120, 148-168, 186-206, 237-257, 279-299, and 305-325; these read LVMV…NYFV, LNNM…SGLL, FTVF…INLL, LFIW…PVLA, LFWF…FGLI, MILI…VVGM, and AYFG…LFNW. Histidine 243 provides a ligand contact to Cu cation. The segment at residues 243–247 is a cross-link (1'-histidyl-3'-tyrosine (His-Tyr)); the sequence is HPEVY. Tyrosine 247 serves as a coordination point for O2. Cu cation contacts are provided by histidine 292 and histidine 293.

It belongs to the heme-copper respiratory oxidase family. Component of the cytochrome c oxidase (complex IV, CIV), a multisubunit enzyme composed of a catalytic core of 3 subunits and several supernumerary subunits. The complex exists as a monomer or a dimer and forms supercomplexes (SCs) in the inner mitochondrial membrane with ubiquinol-cytochrome c oxidoreductase (cytochrome b-c1 complex, complex III, CIII). Heme serves as cofactor. Requires Cu cation as cofactor.

The protein localises to the mitochondrion inner membrane. It carries out the reaction 4 Fe(II)-[cytochrome c] + O2 + 8 H(+)(in) = 4 Fe(III)-[cytochrome c] + 2 H2O + 4 H(+)(out). It participates in energy metabolism; oxidative phosphorylation. In terms of biological role, component of the cytochrome c oxidase, the last enzyme in the mitochondrial electron transport chain which drives oxidative phosphorylation. The respiratory chain contains 3 multisubunit complexes succinate dehydrogenase (complex II, CII), ubiquinol-cytochrome c oxidoreductase (cytochrome b-c1 complex, complex III, CIII) and cytochrome c oxidase (complex IV, CIV), that cooperate to transfer electrons derived from NADH and succinate to molecular oxygen, creating an electrochemical gradient over the inner membrane that drives transmembrane transport and the ATP synthase. Cytochrome c oxidase is the component of the respiratory chain that catalyzes the reduction of oxygen to water. Electrons originating from reduced cytochrome c in the intermembrane space (IMS) are transferred via the dinuclear copper A center (CU(A)) of subunit 2 and heme A of subunit 1 to the active site in subunit 1, a binuclear center (BNC) formed by heme A3 and copper B (CU(B)). The BNC reduces molecular oxygen to 2 water molecules using 4 electrons from cytochrome c in the IMS and 4 protons from the mitochondrial matrix. This chain is Cytochrome c oxidase subunit 1 (COI), found in Strigomonas oncopelti (Parasitic flagellate).